The primary structure comprises 64 residues: uncharacterized protein (64 aa).

This is an uncharacterized protein from Bacillus subtilis (strain 168).